Here is a 405-residue protein sequence, read N- to C-terminus: 2,3-diketo-5-methylthiopentyl-1-phosphate enolase (405 aa).

The Proton acceptor role is filled by Lys-91. Substrate-binding positions include Lys-140, Lys-166 to Glu-169, His-257, Gly-329, and Gly-351 to Gly-352. Mg(2+) contacts are provided by Lys-166, Asp-168, and Glu-169. Lys-166 bears the N6-carboxylysine mark.

This sequence belongs to the RuBisCO large chain family. Type IV subfamily. In terms of assembly, homodimer. Requires Mg(2+) as cofactor.

The enzyme catalyses 5-methylsulfanyl-2,3-dioxopentyl phosphate = 2-hydroxy-5-methylsulfanyl-3-oxopent-1-enyl phosphate. It functions in the pathway amino-acid biosynthesis; L-methionine biosynthesis via salvage pathway; L-methionine from S-methyl-5-thio-alpha-D-ribose 1-phosphate: step 3/6. Functionally, catalyzes the enolization of 2,3-diketo-5-methylthiopentyl-1-phosphate (DK-MTP-1-P) into 2-hydroxy-3-keto-5-methylthiopentenyl-1-phosphate (HK-MTPenyl-1-P). This is 2,3-diketo-5-methylthiopentyl-1-phosphate enolase from Bacillus licheniformis (strain ATCC 14580 / DSM 13 / JCM 2505 / CCUG 7422 / NBRC 12200 / NCIMB 9375 / NCTC 10341 / NRRL NRS-1264 / Gibson 46).